A 290-amino-acid chain; its full sequence is Shikimate dehydrogenase (NADP(+)) (290 aa).

Shikimate-binding positions include 24–26 (SLS) and threonine 71. Lysine 75 functions as the Proton acceptor in the catalytic mechanism. Residues asparagine 96 and aspartate 111 each coordinate shikimate. Residues 136-140 (GAGGA), 160-165 (NRTVDR), and leucine 233 each bind NADP(+). Tyrosine 235 provides a ligand contact to shikimate. Glycine 256 lines the NADP(+) pocket.

The protein belongs to the shikimate dehydrogenase family. In terms of assembly, homodimer.

It catalyses the reaction shikimate + NADP(+) = 3-dehydroshikimate + NADPH + H(+). It participates in metabolic intermediate biosynthesis; chorismate biosynthesis; chorismate from D-erythrose 4-phosphate and phosphoenolpyruvate: step 4/7. In terms of biological role, involved in the biosynthesis of the chorismate, which leads to the biosynthesis of aromatic amino acids. Catalyzes the reversible NADPH linked reduction of 3-dehydroshikimate (DHSA) to yield shikimate (SA). This Methanopyrus kandleri (strain AV19 / DSM 6324 / JCM 9639 / NBRC 100938) protein is Shikimate dehydrogenase (NADP(+)).